A 451-amino-acid polypeptide reads, in one-letter code: Glucose-6-phosphate isomerase (451 aa).

The Proton donor role is filled by E291. Residues H312 and K426 contribute to the active site.

Belongs to the GPI family.

The protein resides in the cytoplasm. The enzyme catalyses alpha-D-glucose 6-phosphate = beta-D-fructose 6-phosphate. It functions in the pathway carbohydrate biosynthesis; gluconeogenesis. The protein operates within carbohydrate degradation; glycolysis; D-glyceraldehyde 3-phosphate and glycerone phosphate from D-glucose: step 2/4. Functionally, catalyzes the reversible isomerization of glucose-6-phosphate to fructose-6-phosphate. The polypeptide is Glucose-6-phosphate isomerase (Thermoanaerobacter sp. (strain X514)).